Here is a 412-residue protein sequence, read N- to C-terminus: NADH-quinone oxidoreductase subunit D (412 aa).

Belongs to the complex I 49 kDa subunit family. In terms of assembly, NDH-1 is composed of 14 different subunits. Subunits NuoB, C, D, E, F, and G constitute the peripheral sector of the complex.

It localises to the cell inner membrane. The enzyme catalyses a quinone + NADH + 5 H(+)(in) = a quinol + NAD(+) + 4 H(+)(out). Its function is as follows. NDH-1 shuttles electrons from NADH, via FMN and iron-sulfur (Fe-S) centers, to quinones in the respiratory chain. The immediate electron acceptor for the enzyme in this species is believed to be a menaquinone. Couples the redox reaction to proton translocation (for every two electrons transferred, four hydrogen ions are translocated across the cytoplasmic membrane), and thus conserves the redox energy in a proton gradient. The chain is NADH-quinone oxidoreductase subunit D from Flavobacterium psychrophilum (strain ATCC 49511 / DSM 21280 / CIP 103535 / JIP02/86).